A 447-amino-acid polypeptide reads, in one-letter code: 23S rRNA (uracil(1939)-C(5))-methyltransferase RlmD (447 aa).

The TRAM domain occupies 7 to 66; that stretch reads RKPLSQEPQKASIEALTHEGRGIAHVAGKTVFIDGALPGETVWFHYLRRRGKFDEGRVLE. [4Fe-4S] cluster contacts are provided by Cys79, Cys85, Cys88, and Cys168. Gln275, Phe304, Asn309, Glu325, Asp352, and Asp374 together coordinate S-adenosyl-L-methionine. Cys400 functions as the Nucleophile in the catalytic mechanism.

It belongs to the class I-like SAM-binding methyltransferase superfamily. RNA M5U methyltransferase family. RlmD subfamily.

It catalyses the reaction uridine(1939) in 23S rRNA + S-adenosyl-L-methionine = 5-methyluridine(1939) in 23S rRNA + S-adenosyl-L-homocysteine + H(+). Its function is as follows. Catalyzes the formation of 5-methyl-uridine at position 1939 (m5U1939) in 23S rRNA. This Nitrosococcus oceani (strain ATCC 19707 / BCRC 17464 / JCM 30415 / NCIMB 11848 / C-107) protein is 23S rRNA (uracil(1939)-C(5))-methyltransferase RlmD.